The following is a 703-amino-acid chain: MEQSVDSLKVNHNDSEESKTDSQHLTYMDSSEPSFGQDGSPRVLPVTTPEEDGSLTSQNIPGPLTQAQILSAEQFHLVDQNGQPVQYELQSLGDSNAQMMIVASPSENGQVLRVIPSPQTGMTQVIIPQGPLVDENSPQDVSEEKPSDRNLPAVRVDALADSNSSYVLHPQASLTLPKKTVTRILEEPLLAPLQPLSSNTPIWACRLRSCEKIGDSYRGYCVSETELESVLTFHKQQTQSVWGTRQSPSPAKPATRLMWKSQYVPYDGIPFVNAGSRAVVMECQYGPRRKGFQLKKIGELENRSCQLYKATCPARIYIKKVQKFPDYRVPTDPKIDRKIIRMEQEKAFNLLKKNLVDAGGVLRWYVQLPTQQAHQYHELETPCLPLSSSSFPISSLEEEEAAIRDENCTLPSRLHPQVAHKIQELVSQGIEQVYAVRKQLRKFVERELFKPDEVPERHNLSFFPTVNDIRNHIHEVQKSLRNGDNICNSEIIPATLQWTTDSGNILRETVTVTLAEGNSQGESVSSKLETNQTRNSLSPEPAQLLSSLSSFQPKIFTHLQGLQLQPRFTSDGSPALISVNNHPSSSPSRLLDSVRSVVMNNNSLLLGQTHCLQTDTPLTPNSSISSTMSNLPGPDQNLVAVDQLVEVEDVEDTETLEGNVHRILLGNVQTIPIQIIDNPPVLSNFGSILKEPIFDCFGGPIKI.

Disordered regions lie at residues 1-61 (MEQS…QNIP), 130-150 (GPLVDENSPQDVSEEKPSDRN), and 517-539 (GNSQGESVSSKLETNQTRNSLSP). Residues 9–22 (KVNHNDSEESKTDS) show a composition bias toward basic and acidic residues. Residues 23-34 (QHLTYMDSSEPS) show a composition bias toward polar residues.

The protein resides in the nucleus. Its function is as follows. Acts as a transcriptional activator that mediates the calcium- and neuron-selective induction of BDNF exon III transcription. Binds to the consensus calcium-response element CaRE1 5'-CTATTTCGAG-3' sequence. In Bos taurus (Bovine), this protein is Calcium-responsive transcription factor (CARF).